The primary structure comprises 204 residues: Holliday junction branch migration complex subunit RuvA (204 aa).

A domain I region spans residues 1–67 (MIDYLYGTLD…GGVISLYGFF (67 aa)). Residues 68–149 (TIEEREMYLL…TVNVLNKEKQ (82 aa)) form a domain II region. Residues 150–154 (TGAET) form a flexible linker region. The tract at residues 155 to 204 (IKNTMVSEAIAGLITLGYKMQQARVAVTNVYEHNENITLEDLIKKSLQYL) is domain III.

The protein belongs to the RuvA family. As to quaternary structure, homotetramer. Forms an RuvA(8)-RuvB(12)-Holliday junction (HJ) complex. HJ DNA is sandwiched between 2 RuvA tetramers; dsDNA enters through RuvA and exits via RuvB. An RuvB hexamer assembles on each DNA strand where it exits the tetramer. Each RuvB hexamer is contacted by two RuvA subunits (via domain III) on 2 adjacent RuvB subunits; this complex drives branch migration. In the full resolvosome a probable DNA-RuvA(4)-RuvB(12)-RuvC(2) complex forms which resolves the HJ.

Its subcellular location is the cytoplasm. Functionally, the RuvA-RuvB-RuvC complex processes Holliday junction (HJ) DNA during genetic recombination and DNA repair, while the RuvA-RuvB complex plays an important role in the rescue of blocked DNA replication forks via replication fork reversal (RFR). RuvA specifically binds to HJ cruciform DNA, conferring on it an open structure. The RuvB hexamer acts as an ATP-dependent pump, pulling dsDNA into and through the RuvAB complex. HJ branch migration allows RuvC to scan DNA until it finds its consensus sequence, where it cleaves and resolves the cruciform DNA. The chain is Holliday junction branch migration complex subunit RuvA from Endomicrobium trichonymphae.